The following is an 843-amino-acid chain: General transcription and DNA repair factor IIH helicase/translocase subunit XPB/SSL2 (843 aa).

Positions 1–85 (MTDVEGYQPK…TAADSSMNQM (85 aa)) are disordered. A compositionally biased stretch (acidic residues) spans 26–41 (SDEDSPATDAEIDENY). Basic and acidic residues predominate over residues 42-56 (DDNRETSEGRGERDT). The segment covering 64–74 (KKPRKKTKSSR) has biased composition (basic residues). The short motif at 64–75 (KKPRKKTKSSRH) is the Nuclear localization signal element. The Helicase ATP-binding domain occupies 373-535 (MFGNGRARSG…DLNFLIGPKL (163 aa)). 386-393 (LPCGAGKT) lines the ATP pocket. A DEAH box motif is present at residues 488 to 491 (DEVH). The 155-residue stretch at 589 to 743 (QACQFLIQYH…KVITHLHGME (155 aa)) folds into the Helicase C-terminal domain. S752 bears the Phosphoserine mark.

The protein belongs to the helicase family. RAD25/XPB subfamily. In terms of assembly, component of the 7-subunit TFIIH core complex composed of XPB/SSL2, XPD/RAD3, SSL1, TFB1, TFB2, TFB4 and TFB5, which is active in NER. The core complex associates with the 3-subunit CTD-kinase module TFIIK composed of CCL1, KIN28 and TFB3 to form the 10-subunit holoenzyme (holo-TFIIH) active in transcription. An additionnal subunit, TFB6, plays a role in the dissociation of the SSL2 helicase from TFIIH after transcription initiation. Interacts directly with TFB6. Requires Mg(2+) as cofactor.

Its subcellular location is the nucleus. It carries out the reaction Couples ATP hydrolysis with the unwinding of duplex DNA by translocating in the 3'-5' direction.. It catalyses the reaction ATP + H2O = ADP + phosphate + H(+). ATP-dependent DNA translocase. Component of the general transcription and DNA repair factor IIH (TFIIH) core complex. When complexed to CDK-activating kinase (CAK), involved in RNA transcription by RNA polymerase II. May have 3'-5' helicase activity alone, the TFIIH core however has no 3'-5' helicase activity. Also involved in transcription-coupled nucleotide excision repair (NER) of damaged DNA. In NER, TFIIH acts by opening DNA around the lesion to allow the excision of the damaged oligonucleotide and its replacement by a new DNA fragment. The ATPase activity of XPB/SSL2, but not its helicase activity, is required for DNA opening. In transcription, TFIIH has an essential role in transcription initiation. When the pre-initiation complex (PIC) has been established, TFIIH is required for promoter opening and promoter escape. The ATP-dependent helicase activity of XPB/SSL2 is required for promoter opening and promoter escape. XPB/SSL2 acts as a double-stranded DNA translocase, promoting DNA opening by tracking in a 5'-3' dirction along the nontemplate promoter strand, rotating and inserting DNA into the Pol II active site cleft, leading to DNA unwinding. A dsDNA-stimulated ATPase, dATP and ATP are equally good substrates. May also use this translocase mechanism during DNA repair rather than physically wedging open damaged DNA. The polypeptide is General transcription and DNA repair factor IIH helicase/translocase subunit XPB/SSL2 (Saccharomyces cerevisiae (strain ATCC 204508 / S288c) (Baker's yeast)).